A 2219-amino-acid chain; its full sequence is RNA-directed RNA polymerase L (2219 aa).

The tract at residues 26-289 (KLAFLVQTEP…TTEDDVEYLI (264 aa)) is endonuclease. The Mn(2+) site is built by glutamate 51, aspartate 89, and glutamate 102. The active site involves lysine 115. Residues 1177 to 1373 (LSMKLNVSLA…YMSDQLNKFV (197 aa)) form the RdRp catalytic domain. Aspartate 1335 is a Mg(2+) binding site.

It belongs to the Bunyavirales RNA polymerase family. In terms of assembly, homomultimer; the oligomeric structure is essential for the polymerase activity. Interacts with nucleoprotein N. Interacts with protein Z; this interaction inhibits viral transcription and replication, Z partially blocks the product exit tunnel for the releasing nascent RNA product. Requires Mn(2+) as cofactor. The cofactor is Mg(2+).

The protein resides in the virion. Its subcellular location is the host cytoplasm. The enzyme catalyses RNA(n) + a ribonucleoside 5'-triphosphate = RNA(n+1) + diphosphate. RNA-dependent RNA polymerase, which is responsible for the replication and transcription of the viral RNA genome using antigenomic RNA as an intermediate. During transcription, synthesizes subgenomic RNAs and assures their capping by a cap-snatching mechanism, which involves the endonuclease activity cleaving the host capped pre-mRNAs. These short capped RNAs are then used as primers for viral transcription. The 3'-end of subgenomic mRNAs molecules are heterogeneous and not polyadenylated. The replicase function is to direct synthesis of antigenomic and genomic RNA which are encapsidated and non capped. As a consequence of the use of the same enzyme for both transcription and replication, these mechanisms need to be well coordinated. These processes may be regulated by proteins N and Z in a dose-dependent manner. Z protein inhibits the viral polymerase L und thus the viral transcription and RNA synthesis. The chain is RNA-directed RNA polymerase L from Homo sapiens (Human).